The sequence spans 146 residues: 3-dehydroquinate dehydratase (146 aa).

Tyr24 serves as the catalytic Proton acceptor. Positions 73, 79, and 86 each coordinate substrate. His99 acts as the Proton donor in catalysis. Substrate is bound by residues 100–101 and Arg110; that span reads LS.

Belongs to the type-II 3-dehydroquinase family. As to quaternary structure, homododecamer.

The enzyme catalyses 3-dehydroquinate = 3-dehydroshikimate + H2O. It participates in metabolic intermediate biosynthesis; chorismate biosynthesis; chorismate from D-erythrose 4-phosphate and phosphoenolpyruvate: step 3/7. In terms of biological role, catalyzes a trans-dehydration via an enolate intermediate. This chain is 3-dehydroquinate dehydratase, found in Shewanella baltica (strain OS223).